The sequence spans 89 residues: Small ribosomal subunit protein uS15 (89 aa).

This sequence belongs to the universal ribosomal protein uS15 family. In terms of assembly, part of the 30S ribosomal subunit. Forms a bridge to the 50S subunit in the 70S ribosome, contacting the 23S rRNA.

Its function is as follows. One of the primary rRNA binding proteins, it binds directly to 16S rRNA where it helps nucleate assembly of the platform of the 30S subunit by binding and bridging several RNA helices of the 16S rRNA. In terms of biological role, forms an intersubunit bridge (bridge B4) with the 23S rRNA of the 50S subunit in the ribosome. This Polynucleobacter necessarius subsp. necessarius (strain STIR1) protein is Small ribosomal subunit protein uS15.